The sequence spans 316 residues: Epoxide hydrolase 2 (316 aa).

The AB hydrolase-1 domain maps to 25 to 302; that stretch reads PAVLFLHGFP…AAHFINQERP (278 aa). Catalysis depends on D101, which acts as the Nucleophile. Y150 lines the an epoxide pocket. Y230 acts as the Proton donor in catalysis. Residue H295 is the Proton acceptor of the active site.

The protein belongs to the AB hydrolase superfamily. Epoxide hydrolase family. Homodimer. In terms of tissue distribution, highly expressed in young fruits 15 days after anthesis (15-DAA). Also observed in stems and leaves.

The enzyme catalyses an epoxide + H2O = an ethanediol. It catalyses the reaction (24S)-24,25-epoxycucurbitadienol + H2O = (24R)-24,25-dihydroxycucurbitadienol. Its pathway is secondary metabolite biosynthesis; terpenoid biosynthesis. Its function is as follows. Epoxide hydrolase involved in the biosynthesis of cucurbitacin and mogroside tetracyclic triterpene natural products (e.g. siamenoside I and mogrosides IV, V and VI). Cucurbitacins have cytotoxic properties and exhibit deterrent taste as a defense barrier against herbivores. Mogrosides are nonsugar highly oxygenated compounds used as high-intensity zero-calorie sweeteners; they also possess pharmacological properties such as regulating immunity, lowering blood sugar and lipid levels, protecting the liver, and acting as antioxidants and antitumor agents. Catalyzes the hydrolysis of aromatic epoxide-containing substrates, such as the conversion of 24,25-epoxycucurbitadienol to 24,25-dihydroxycucurbitadienol. In Siraitia grosvenorii (Monk's fruit), this protein is Epoxide hydrolase 2.